A 420-amino-acid chain; its full sequence is UDP-N-acetylglucosamine 1-carboxyvinyltransferase (420 aa).

Residue 22-23 coordinates phosphoenolpyruvate; that stretch reads KN. R94 contributes to the UDP-N-acetyl-alpha-D-glucosamine binding site. C118 acts as the Proton donor in catalysis. Residue C118 is modified to 2-(S-cysteinyl)pyruvic acid O-phosphothioketal. 2 residues coordinate UDP-N-acetyl-alpha-D-glucosamine: D306 and I328.

Belongs to the EPSP synthase family. MurA subfamily.

Its subcellular location is the cytoplasm. It carries out the reaction phosphoenolpyruvate + UDP-N-acetyl-alpha-D-glucosamine = UDP-N-acetyl-3-O-(1-carboxyvinyl)-alpha-D-glucosamine + phosphate. It functions in the pathway cell wall biogenesis; peptidoglycan biosynthesis. Its function is as follows. Cell wall formation. Adds enolpyruvyl to UDP-N-acetylglucosamine. The sequence is that of UDP-N-acetylglucosamine 1-carboxyvinyltransferase from Jannaschia sp. (strain CCS1).